A 227-amino-acid polypeptide reads, in one-letter code: Cytochrome c oxidase subunit 2 (227 aa).

Topologically, residues 1 to 14 (MAYPFQLGFQDATS) are mitochondrial intermembrane. The helical transmembrane segment at 15 to 45 (PIMEELLHFHDHTLMIVFLISSLVLYIITLM) threads the bilayer. Residues 46–59 (LTTKLTHTSTMDAQ) lie on the Mitochondrial matrix side of the membrane. Residues 60–87 (EVETVWTILPAIILILIALPSLRILYMM) form a helical membrane-spanning segment. The Mitochondrial intermembrane segment spans residues 88 to 227 (DEVNNPSLTV…IFEKWSASML (140 aa)). 6 residues coordinate Cu cation: His161, Cys196, Glu198, Cys200, His204, and Met207. Glu198 contacts Mg(2+).

Belongs to the cytochrome c oxidase subunit 2 family. As to quaternary structure, component of the cytochrome c oxidase (complex IV, CIV), a multisubunit enzyme composed of 14 subunits. The complex is composed of a catalytic core of 3 subunits MT-CO1, MT-CO2 and MT-CO3, encoded in the mitochondrial DNA, and 11 supernumerary subunits COX4I, COX5A, COX5B, COX6A, COX6B, COX6C, COX7A, COX7B, COX7C, COX8 and NDUFA4, which are encoded in the nuclear genome. The complex exists as a monomer or a dimer and forms supercomplexes (SCs) in the inner mitochondrial membrane with NADH-ubiquinone oxidoreductase (complex I, CI) and ubiquinol-cytochrome c oxidoreductase (cytochrome b-c1 complex, complex III, CIII), resulting in different assemblies (supercomplex SCI(1)III(2)IV(1) and megacomplex MCI(2)III(2)IV(2)). Found in a complex with TMEM177, COA6, COX18, COX20, SCO1 and SCO2. Interacts with TMEM177 in a COX20-dependent manner. Interacts with COX20. Interacts with COX16. Cu cation serves as cofactor.

Its subcellular location is the mitochondrion inner membrane. The catalysed reaction is 4 Fe(II)-[cytochrome c] + O2 + 8 H(+)(in) = 4 Fe(III)-[cytochrome c] + 2 H2O + 4 H(+)(out). Functionally, component of the cytochrome c oxidase, the last enzyme in the mitochondrial electron transport chain which drives oxidative phosphorylation. The respiratory chain contains 3 multisubunit complexes succinate dehydrogenase (complex II, CII), ubiquinol-cytochrome c oxidoreductase (cytochrome b-c1 complex, complex III, CIII) and cytochrome c oxidase (complex IV, CIV), that cooperate to transfer electrons derived from NADH and succinate to molecular oxygen, creating an electrochemical gradient over the inner membrane that drives transmembrane transport and the ATP synthase. Cytochrome c oxidase is the component of the respiratory chain that catalyzes the reduction of oxygen to water. Electrons originating from reduced cytochrome c in the intermembrane space (IMS) are transferred via the dinuclear copper A center (CU(A)) of subunit 2 and heme A of subunit 1 to the active site in subunit 1, a binuclear center (BNC) formed by heme A3 and copper B (CU(B)). The BNC reduces molecular oxygen to 2 water molecules using 4 electrons from cytochrome c in the IMS and 4 protons from the mitochondrial matrix. This is Cytochrome c oxidase subunit 2 (MT-CO2) from Balaenoptera borealis (Sei whale).